A 241-amino-acid polypeptide reads, in one-letter code: NH(3)-dependent NAD(+) synthetase (241 aa).

29-36 lines the ATP pocket; it reads GISGGIDS. Position 35 (Asp35) interacts with Mg(2+). Arg110 serves as a coordination point for deamido-NAD(+). Glu135 contacts Mg(2+). 2 residues coordinate deamido-NAD(+): Lys143 and Asp150. ATP contacts are provided by Lys159 and Ser181. 226 to 227 serves as a coordination point for deamido-NAD(+); it reads HK.

It belongs to the NAD synthetase family. In terms of assembly, homodimer.

It catalyses the reaction deamido-NAD(+) + NH4(+) + ATP = AMP + diphosphate + NAD(+) + H(+). It functions in the pathway cofactor biosynthesis; NAD(+) biosynthesis; NAD(+) from deamido-NAD(+) (ammonia route): step 1/1. Functionally, catalyzes the ATP-dependent amidation of deamido-NAD to form NAD. Uses ammonia as a nitrogen source. The protein is NH(3)-dependent NAD(+) synthetase of Finegoldia magna (strain ATCC 29328 / DSM 20472 / WAL 2508) (Peptostreptococcus magnus).